The chain runs to 397 residues: Phosphoglycerate kinase (397 aa).

Substrate contacts are provided by residues 25 to 27 (DLN), Arg41, 64 to 67 (HLGR), Arg118, and Arg151. ATP is bound by residues Lys202, Glu324, and 350 to 353 (GGDT).

This sequence belongs to the phosphoglycerate kinase family. In terms of assembly, monomer.

Its subcellular location is the cytoplasm. The enzyme catalyses (2R)-3-phosphoglycerate + ATP = (2R)-3-phospho-glyceroyl phosphate + ADP. It participates in carbohydrate degradation; glycolysis; pyruvate from D-glyceraldehyde 3-phosphate: step 2/5. This Albidiferax ferrireducens (strain ATCC BAA-621 / DSM 15236 / T118) (Rhodoferax ferrireducens) protein is Phosphoglycerate kinase.